The sequence spans 270 residues: Release factor glutamine methyltransferase (270 aa).

S-adenosyl-L-methionine-binding positions include 112–116 (GTGSG), aspartate 135, tryptophan 162, and asparagine 178. A substrate-binding site is contributed by 178 to 181 (NPPY).

Belongs to the protein N5-glutamine methyltransferase family. PrmC subfamily.

The catalysed reaction is L-glutaminyl-[peptide chain release factor] + S-adenosyl-L-methionine = N(5)-methyl-L-glutaminyl-[peptide chain release factor] + S-adenosyl-L-homocysteine + H(+). Functionally, methylates the class 1 translation termination release factors RF1/PrfA and RF2/PrfB on the glutamine residue of the universally conserved GGQ motif. The protein is Release factor glutamine methyltransferase of Bordetella pertussis (strain Tohama I / ATCC BAA-589 / NCTC 13251).